We begin with the raw amino-acid sequence, 134 residues long: MLLQPKRTKFRKMHKGRNRGTKVNDNISFGQFALKAISRGRLKSCQIEAARRAISRAIKRQGKIWIRVFPDKPITKKPLEVRMGKGKGNVEYWVALIQPGKILYEINGVPKELAYNAFKLGASKLPVKTTLIGR.

A compositionally biased stretch (basic residues) spans 1-20 (MLLQPKRTKFRKMHKGRNRG). The interval 1-21 (MLLQPKRTKFRKMHKGRNRGT) is disordered.

It belongs to the universal ribosomal protein uL16 family. As to quaternary structure, part of the 50S ribosomal subunit.

Functionally, binds 23S rRNA and is also seen to make contacts with the A and possibly P site tRNAs. The sequence is that of Large ribosomal subunit protein uL16 from Blochmanniella pennsylvanica (strain BPEN).